A 258-amino-acid polypeptide reads, in one-letter code: Tetraspanin-15 (258 aa).

Topologically, residues 1 to 20 (MGALGDSAYGARGRLIKFSY) are cytoplasmic. Residues 21–41 (IVTALISILFSISCICYGIWL) traverse the membrane as a helical segment. The Extracellular segment spans residues 42–62 (LARRSQYAELVSPSLYVDVGR). Residues 63 to 83 (ILVIISILSILNYLICFYAIF) form a helical membrane-spanning segment. The Cytoplasmic segment spans residues 84–93 (KEMRCFVTSC). Residues 94–114 (AVASIVIAVMLIIGGCIGLNF) form a helical membrane-spanning segment. The Extracellular segment spans residues 115 to 223 (RDQLTHYTPL…STCYEPLQND (109 aa)). A helical transmembrane segment spans residues 224-244 (LLHVMNVASWLCITNAIVQII). Residues 245–258 (PSVAGCWYSKLIRK) are Cytoplasmic-facing.

Belongs to the tetraspanin (TM4SF) family. In terms of assembly, interacts with doxa-1 and bli-3. Expressed in the body wall (hyp7 hypodermal syncitium), pharynx and vulva. Expressed in a punctate pattern along the thick region of the hypodermis.

It localises to the membrane. Its function is as follows. Plays a role in cuticle biogenesis. In complex with doxa-1 and the dual oxidase bli-3, promotes the generation of reactive oxygen species (ROS) and tyrosine cross-linking of collagen, thus stabilizing cuticular extracellular matrix. The chain is Tetraspanin-15 from Caenorhabditis elegans.